A 104-amino-acid polypeptide reads, in one-letter code: Large ribosomal subunit protein bL21 (104 aa).

It belongs to the bacterial ribosomal protein bL21 family. As to quaternary structure, part of the 50S ribosomal subunit. Contacts protein L20.

This protein binds to 23S rRNA in the presence of protein L20. This Clostridium tetani (strain Massachusetts / E88) protein is Large ribosomal subunit protein bL21.